The primary structure comprises 98 residues: NADH-ubiquinone oxidoreductase chain 4L (98 aa).

3 consecutive transmembrane segments (helical) span residues 1–21 (MSLINMNLMLAFTMSLTGLLM), 29–49 (ALLCLEGMMLSLFTLTTLTIL), and 61–81 (IILLVFAACEAAIGLALLVMI).

It belongs to the complex I subunit 4L family. Core subunit of respiratory chain NADH dehydrogenase (Complex I) which is composed of 45 different subunits.

The protein localises to the mitochondrion inner membrane. It catalyses the reaction a ubiquinone + NADH + 5 H(+)(in) = a ubiquinol + NAD(+) + 4 H(+)(out). In terms of biological role, core subunit of the mitochondrial membrane respiratory chain NADH dehydrogenase (Complex I) which catalyzes electron transfer from NADH through the respiratory chain, using ubiquinone as an electron acceptor. Part of the enzyme membrane arm which is embedded in the lipid bilayer and involved in proton translocation. The chain is NADH-ubiquinone oxidoreductase chain 4L (MT-ND4L) from Platanista minor (Indus river dolphin).